A 108-amino-acid polypeptide reads, in one-letter code: MAKNIGLNVAVPEKDCDDVNCPFHGSLPVRGQVITGKVVSERMQGTVVVERNFLHKVQKYDRYEKRSSKIHAHMAPCLNAKIGDEVKIAECRPLNKTTSYVVVEVIKE.

Belongs to the universal ribosomal protein uS17 family. In terms of assembly, part of the 30S ribosomal subunit.

Functionally, one of the primary rRNA binding proteins, it binds specifically to the 5'-end of 16S ribosomal RNA. This Methanocorpusculum labreanum (strain ATCC 43576 / DSM 4855 / Z) protein is Small ribosomal subunit protein uS17.